The following is a 374-amino-acid chain: Queuine tRNA-ribosyltransferase (374 aa).

D89 serves as the catalytic Proton acceptor. Residues 89–93 (DSGGF), D143, Q187, and G214 contribute to the substrate site. Residues 245-251 (GVGKPED) are RNA binding. The active-site Nucleophile is the D264. The interval 269-273 (TRNAR) is RNA binding; important for wobble base 34 recognition. Positions 302, 304, 307, and 333 each coordinate Zn(2+).

It belongs to the queuine tRNA-ribosyltransferase family. Homodimer. Within each dimer, one monomer is responsible for RNA recognition and catalysis, while the other monomer binds to the replacement base PreQ1. Zn(2+) serves as cofactor.

The enzyme catalyses 7-aminomethyl-7-carbaguanine + guanosine(34) in tRNA = 7-aminomethyl-7-carbaguanosine(34) in tRNA + guanine. The protein operates within tRNA modification; tRNA-queuosine biosynthesis. Its function is as follows. Catalyzes the base-exchange of a guanine (G) residue with the queuine precursor 7-aminomethyl-7-deazaguanine (PreQ1) at position 34 (anticodon wobble position) in tRNAs with GU(N) anticodons (tRNA-Asp, -Asn, -His and -Tyr). Catalysis occurs through a double-displacement mechanism. The nucleophile active site attacks the C1' of nucleotide 34 to detach the guanine base from the RNA, forming a covalent enzyme-RNA intermediate. The proton acceptor active site deprotonates the incoming PreQ1, allowing a nucleophilic attack on the C1' of the ribose to form the product. After dissociation, two additional enzymatic reactions on the tRNA convert PreQ1 to queuine (Q), resulting in the hypermodified nucleoside queuosine (7-(((4,5-cis-dihydroxy-2-cyclopenten-1-yl)amino)methyl)-7-deazaguanosine). The chain is Queuine tRNA-ribosyltransferase from Shewanella baltica (strain OS185).